A 45-amino-acid polypeptide reads, in one-letter code: MKPTFRPHRKKRARKIGYRARMATASGRKVIKSRRLKGRKRLTVV.

This sequence belongs to the bacterial ribosomal protein bL34 family.

The chain is Large ribosomal subunit protein bL34 from Opitutus terrae (strain DSM 11246 / JCM 15787 / PB90-1).